Here is a 164-residue protein sequence, read N- to C-terminus: NADH-quinone oxidoreductase subunit I (164 aa).

2 4Fe-4S ferredoxin-type domains span residues 55–85 (LRRYPNGEERCIACKLCEAICPAQAITIDAE) and 95–124 (TRYDIDMTKCIYCGFCQEACPVDAIVEGPN). Cys65, Cys68, Cys71, Cys75, Cys104, Cys107, Cys110, and Cys114 together coordinate [4Fe-4S] cluster.

This sequence belongs to the complex I 23 kDa subunit family. As to quaternary structure, NDH-1 is composed of 14 different subunits. Subunits NuoA, H, J, K, L, M, N constitute the membrane sector of the complex. Requires [4Fe-4S] cluster as cofactor.

It localises to the cell inner membrane. The enzyme catalyses a quinone + NADH + 5 H(+)(in) = a quinol + NAD(+) + 4 H(+)(out). Functionally, NDH-1 shuttles electrons from NADH, via FMN and iron-sulfur (Fe-S) centers, to quinones in the respiratory chain. The immediate electron acceptor for the enzyme in this species is believed to be ubiquinone. Couples the redox reaction to proton translocation (for every two electrons transferred, four hydrogen ions are translocated across the cytoplasmic membrane), and thus conserves the redox energy in a proton gradient. This is NADH-quinone oxidoreductase subunit I from Jannaschia sp. (strain CCS1).